The primary structure comprises 79 residues: Small ribosomal subunit protein eS17 (79 aa).

The protein belongs to the eukaryotic ribosomal protein eS17 family.

The polypeptide is Small ribosomal subunit protein eS17 (Saccharolobus islandicus (strain Y.N.15.51 / Yellowstone #2) (Sulfolobus islandicus)).